We begin with the raw amino-acid sequence, 267 residues long: Trehalose 2-sulfotransferase (267 aa).

Alpha,alpha-trehalose contacts are provided by residues Q14, 33-39 (EPQEFFQ), P48, and W53. E36 functions as the Proton acceptor in the catalytic mechanism.

Belongs to the Stf0 sulfotransferase family. As to quaternary structure, homodimer.

It catalyses the reaction alpha,alpha-trehalose + 3'-phosphoadenylyl sulfate = 2-O-sulfo-alpha,alpha-trehalose + adenosine 3',5'-bisphosphate + H(+). The protein operates within glycolipid metabolism. Catalyzes the sulfuryl group transfer from 3'-phosphoadenosine-5'-phosphosulfate (PAPS) to trehalose, leading to trehalose-2-sulfate (T2S). The sulfation of trehalose is the first step in the biosynthesis of sulfolipid-1 (SL-1), a major cell wall glycolipid in pathogenic mycobacteria. Cannot use free glucose and unnatural stereoisomers of trehalose (alpha,beta (neo-trehalose) and beta,beta (iso-trehalose)) as substrates. The polypeptide is Trehalose 2-sulfotransferase (Mycolicibacterium smegmatis (strain ATCC 700084 / mc(2)155) (Mycobacterium smegmatis)).